The chain runs to 804 residues: Leucine--tRNA ligase (804 aa).

The 'HIGH' region signature appears at Pro-39 to His-50. The 'KMSKS' region signature appears at Lys-580 to Ser-584. Lys-583 is a binding site for ATP.

Belongs to the class-I aminoacyl-tRNA synthetase family.

It is found in the cytoplasm. It catalyses the reaction tRNA(Leu) + L-leucine + ATP = L-leucyl-tRNA(Leu) + AMP + diphosphate. This chain is Leucine--tRNA ligase, found in Mycoplasma mycoides subsp. mycoides SC (strain CCUG 32753 / NCTC 10114 / PG1).